Here is a 429-residue protein sequence, read N- to C-terminus: 3-phosphoshikimate 1-carboxyvinyltransferase (429 aa).

3-phosphoshikimate is bound by residues Lys-11, Ser-12, and Arg-16. Lys-11 provides a ligand contact to phosphoenolpyruvate. The phosphoenolpyruvate site is built by Gly-82 and Arg-110. 3-phosphoshikimate-binding residues include Ser-155, Gln-157, Asp-302, and Lys-329. Gln-157 provides a ligand contact to phosphoenolpyruvate. Asp-302 acts as the Proton acceptor in catalysis. Phosphoenolpyruvate is bound by residues Arg-333 and Arg-385.

Belongs to the EPSP synthase family. In terms of assembly, monomer.

The protein resides in the cytoplasm. The enzyme catalyses 3-phosphoshikimate + phosphoenolpyruvate = 5-O-(1-carboxyvinyl)-3-phosphoshikimate + phosphate. It participates in metabolic intermediate biosynthesis; chorismate biosynthesis; chorismate from D-erythrose 4-phosphate and phosphoenolpyruvate: step 6/7. Its function is as follows. Catalyzes the transfer of the enolpyruvyl moiety of phosphoenolpyruvate (PEP) to the 5-hydroxyl of shikimate-3-phosphate (S3P) to produce enolpyruvyl shikimate-3-phosphate and inorganic phosphate. This chain is 3-phosphoshikimate 1-carboxyvinyltransferase, found in Helicobacter pylori (strain Shi470).